A 265-amino-acid polypeptide reads, in one-letter code: Phosphonates import ATP-binding protein PhnC (265 aa).

The 245-residue stretch at Leu18 to Glu262 folds into the ABC transporter domain. Position 51-58 (Gly51–Ser58) interacts with ATP.

It belongs to the ABC transporter superfamily. Phosphonates importer (TC 3.A.1.9.1) family. The complex is composed of two ATP-binding proteins (PhnC), two transmembrane proteins (PhnE) and a solute-binding protein (PhnD).

The protein localises to the cell inner membrane. The enzyme catalyses phosphonate(out) + ATP + H2O = phosphonate(in) + ADP + phosphate + H(+). Part of the ABC transporter complex PhnCDE involved in phosphonates import. Responsible for energy coupling to the transport system. This is Phosphonates import ATP-binding protein PhnC from Nitratidesulfovibrio vulgaris (strain ATCC 29579 / DSM 644 / CCUG 34227 / NCIMB 8303 / VKM B-1760 / Hildenborough) (Desulfovibrio vulgaris).